The chain runs to 59 residues: Large ribosomal subunit protein bL33 (59 aa).

The protein belongs to the bacterial ribosomal protein bL33 family.

This chain is Large ribosomal subunit protein bL33, found in Neorickettsia sennetsu (strain ATCC VR-367 / Miyayama) (Ehrlichia sennetsu).